Consider the following 255-residue polypeptide: Pimeloyl-[acyl-carrier protein] methyl ester esterase (255 aa).

Residues 16-242 form the AB hydrolase-1 domain; the sequence is LVLLHGWGMN…SSHAPFITEP (227 aa). Substrate-binding positions include Trp-22, 82–83, and 143–147; these read SL and FMALQ. Ser-82 (nucleophile) is an active-site residue. Active-site residues include Asp-207 and His-235. His-235 is a binding site for substrate.

This sequence belongs to the AB hydrolase superfamily. Carboxylesterase BioH family. Monomer.

It is found in the cytoplasm. The enzyme catalyses 6-carboxyhexanoyl-[ACP] methyl ester + H2O = 6-carboxyhexanoyl-[ACP] + methanol + H(+). It functions in the pathway cofactor biosynthesis; biotin biosynthesis. Functionally, the physiological role of BioH is to remove the methyl group introduced by BioC when the pimeloyl moiety is complete. It allows to synthesize pimeloyl-ACP via the fatty acid synthetic pathway through the hydrolysis of the ester bonds of pimeloyl-ACP esters. The polypeptide is Pimeloyl-[acyl-carrier protein] methyl ester esterase (Vibrio vulnificus (strain YJ016)).